The chain runs to 418 residues: NADH-quinone oxidoreductase subunit D (418 aa).

This sequence belongs to the complex I 49 kDa subunit family. NDH-1 is composed of 14 different subunits. Subunits NuoB, C, D, E, F, and G constitute the peripheral sector of the complex.

The protein localises to the cell inner membrane. It carries out the reaction a quinone + NADH + 5 H(+)(in) = a quinol + NAD(+) + 4 H(+)(out). In terms of biological role, NDH-1 shuttles electrons from NADH, via FMN and iron-sulfur (Fe-S) centers, to quinones in the respiratory chain. The immediate electron acceptor for the enzyme in this species is believed to be ubiquinone. Couples the redox reaction to proton translocation (for every two electrons transferred, four hydrogen ions are translocated across the cytoplasmic membrane), and thus conserves the redox energy in a proton gradient. This Bordetella avium (strain 197N) protein is NADH-quinone oxidoreductase subunit D.